We begin with the raw amino-acid sequence, 313 residues long: L-lactate dehydrogenase (313 aa).

Residues V11, D32, R37, Y62, and 76 to 77 each bind NAD(+); that span reads GV. Residues Q79, R85, and 117–120 contribute to the substrate site; that span reads NPVD. NAD(+) contacts are provided by residues 115 to 117 and S143; that span reads ASN. 148 to 151 is a substrate binding site; that stretch reads DTAR. Beta-D-fructose 1,6-bisphosphate is bound by residues R153 and H168. The active-site Proton acceptor is H175. A Phosphotyrosine modification is found at Y221. Residue T230 coordinates substrate.

It belongs to the LDH/MDH superfamily. LDH family. In terms of assembly, homotetramer.

The protein resides in the cytoplasm. The enzyme catalyses (S)-lactate + NAD(+) = pyruvate + NADH + H(+). It functions in the pathway fermentation; pyruvate fermentation to lactate; (S)-lactate from pyruvate: step 1/1. Its activity is regulated as follows. Allosterically activated by fructose 1,6-bisphosphate (FBP). In terms of biological role, catalyzes the conversion of lactate to pyruvate. The sequence is that of L-lactate dehydrogenase from Geotalea daltonii (strain DSM 22248 / JCM 15807 / FRC-32) (Geobacter daltonii).